A 722-amino-acid polypeptide reads, in one-letter code: Bifunctional UDP-N-acetylglucosamine 2-epimerase/N-acetylmannosamine kinase (722 aa).

UDP contacts are provided by Arg19, Ser23, Arg113, His220, and Asn253. Lys259, Glu271, Lys280, and His281 together coordinate CMP-N-acetyl-beta-neuraminate. UDP-binding residues include Val282, Ser301, Ser302, Glu307, and Arg321. The segment at 406-722 is N-acetylmannosamine kinase; that stretch reads TLSALAVDLG…VLDYTTRRIH (317 aa). Asp413 provides a ligand contact to Mg(2+). Gly416 lines the an N-acyl-D-mannosamine 6-phosphate pocket. ADP-binding residues include Thr417, Asn418, and Arg420. 6 residues coordinate an N-acyl-D-mannosamine 6-phosphate: Gly476, Arg477, Thr489, Asn516, Asp517, and Gly545. Gly476, Arg477, Thr489, Asn516, and Asp517 together coordinate an N-acyl-D-mannosamine. The active site involves Asp517. An N-acyl-D-mannosamine-binding residues include Glu566 and His569. His569 contributes to the an N-acyl-D-mannosamine 6-phosphate binding site. Positions 569, 579, 581, and 586 each coordinate Zn(2+). Glu588 contributes to the an N-acyl-D-mannosamine 6-phosphate binding site. An an N-acyl-D-mannosamine-binding site is contributed by Glu588.

This sequence in the N-terminal section; belongs to the UDP-N-acetylglucosamine 2-epimerase family. It in the C-terminal section; belongs to the ROK (NagC/XylR) family. In terms of assembly, homodimer. Homotetramer. Homohexamer. The hexameric form exhibits both enzyme activities, whereas the dimeric form only catalyzes the phosphorylation of N-acyl-D-mannosamine. Phosphorylated. Phosphorylation by PKC activates the UDP-N-acetylglucosamine 2-epimerase activity. In terms of tissue distribution, widely expressed. Highest expression in liver. Also found at high levels in lung, brain and kidney.

The protein resides in the cytoplasm. The protein localises to the cytosol. It carries out the reaction UDP-N-acetyl-alpha-D-glucosamine + H2O = aldehydo-N-acetyl-D-mannosamine + UDP + H(+). The enzyme catalyses an N-acyl-D-mannosamine + ATP = an N-acyl-D-mannosamine 6-phosphate + ADP + H(+). The protein operates within amino-sugar metabolism; N-acetylneuraminate biosynthesis. Its activity is regulated as follows. The UDP-N-acetylglucosamine 2-epimerase activity, in contrast to the N-acetylmannosamine kinase activity, exhibits allosteric regulation by cytidine monophosphate-N-acetylneuraminic acid (CMP-Neu5Ac), the end product of neuraminic acid biosynthesis. Moreover, the activity is contingent upon the oligomeric state of the enzyme. The monomeric form is inactive, while the dimeric form selectively catalyzes the phosphorylation of N-acetylmannosamine. The hexameric form, on the other hand, demonstrates full proficiency in both enzyme activities. Furthermore, the UDP-N-acetylglucosamine 2-epimerase activity is increased by PKC-mediated phosphorylation. Functionally, bifunctional enzyme that possesses both UDP-N-acetylglucosamine 2-epimerase and N-acetylmannosamine kinase activities, and serves as the initiator of the biosynthetic pathway leading to the production of N-acetylneuraminic acid (NeuAc), a critical precursor in the synthesis of sialic acids. By catalyzing this pivotal and rate-limiting step in sialic acid biosynthesis, this enzyme assumes a pivotal role in governing the regulation of cell surface sialylation, playing a role in embryonic angiogenesis. Sialic acids represent a category of negatively charged sugars that reside on the surface of cells as terminal components of glycoconjugates and mediate important functions in various cellular processes, including cell adhesion, signal transduction, and cellular recognition. The polypeptide is Bifunctional UDP-N-acetylglucosamine 2-epimerase/N-acetylmannosamine kinase (Mus musculus (Mouse)).